The chain runs to 823 residues: Endoplasmin homolog (823 aa).

The first 23 residues, 1 to 23 (MRKRTLVSVLFLFSLLFLLPDQG), serve as a signal peptide directing secretion. The interval 29–60 (NAEESSDDVTDPPKVEEKIGGHGGLSTDSDVV) is disordered. A compositionally biased stretch (basic and acidic residues) spans 39-48 (DPPKVEEKIG). Residues E106, N110, D154, M159, N167, K173, 174-175 (SG), 194-199 (QFGVGF), F199, and T246 contribute to the ATP site. N110 is a glycosylation site (N-linked (GlcNAc...) asparagine). Residues 289–328 (ETEVPVEEDESADEETETTSTEEEKEEDAEEEDGEKKQKT) form a disordered region. The span at 290 to 321 (TEVPVEEDESADEETETTSTEEEKEEDAEEED) shows a compositional bias: acidic residues. N-linked (GlcNAc...) asparagine glycans are attached at residues N452 and N620. Residues 777-792 (VADEEIEAAEEPETSE) show a composition bias toward acidic residues. Positions 777–823 (VADEEIEAAEEPETSEATETKSDDLAGGLNIEAEPVEQQEENTKDEL) are disordered. A Prevents secretion from ER motif is present at residues 820–823 (KDEL).

This sequence belongs to the heat shock protein 90 family. In terms of assembly, interacts with FKBP42. Interacts with P23-1. In terms of tissue distribution, ubiquitous.

Its subcellular location is the endoplasmic reticulum lumen. Its function is as follows. May have a molecular chaperone role in the processing of secreted materials. Required for shoot apical meristem (SAM), root apical meristem (RAM) and floral meristem (FM) formation, probably by regulating the folding of CLAVATA proteins (CLVs). Also involved in pollen tube elongation. Involved in resistance to tunicamycin- or high calcium-induced ER stresses. Possesses ATPase activity. This chain is Endoplasmin homolog, found in Arabidopsis thaliana (Mouse-ear cress).